We begin with the raw amino-acid sequence, 84 residues long: RNA-binding protein Hfq (84 aa).

A Sm domain is found at 11–71 (DTFLNFVRKN…ISTIMPGAPI (61 aa)).

It belongs to the Hfq family. In terms of assembly, homohexamer.

RNA chaperone that binds small regulatory RNA (sRNAs) and mRNAs to facilitate mRNA translational regulation in response to envelope stress, environmental stress and changes in metabolite concentrations. Also binds with high specificity to tRNAs. This is RNA-binding protein Hfq from Beijerinckia indica subsp. indica (strain ATCC 9039 / DSM 1715 / NCIMB 8712).